The sequence spans 344 residues: Protease HtpX homolog (344 aa).

Transmembrane regions (helical) follow at residues V8–A28, A46–V66, and V74–A94. A Zn(2+)-binding site is contributed by H172. Residue E173 is part of the active site. H176 serves as a coordination point for Zn(2+). 2 helical membrane-spanning segments follow: residues A183–V203 and L220–F240. E245 contacts Zn(2+).

This sequence belongs to the peptidase M48B family. Zn(2+) serves as cofactor.

The protein resides in the cell membrane. The protein is Protease HtpX homolog of Pyrobaculum calidifontis (strain DSM 21063 / JCM 11548 / VA1).